The chain runs to 381 residues: 6-oxocyclohex-1-ene-1-carbonyl-CoA hydrolase (381 aa).

This sequence belongs to the enoyl-CoA hydratase/isomerase family. As to quaternary structure, homohexamer.

It catalyses the reaction 6-oxocyclohex-1-ene-1-carbonyl-CoA + 2 H2O = 3-hydroxy-6-carboxyhexanoyl-CoA + H(+). The protein operates within aromatic compound metabolism; benzoyl-CoA degradation. Functionally, involved in the central benzoyl-CoA catabolism. Catalyzes the addition of one molecule of water to the double bond and the hydrolytic cleavage of C-C bond in the alicyclic ring, 6-oxocyclohex-1-ene-1-carbonyl-CoA (6-OCH-CoA) to yield 3-hydroxypimelyl-CoA. This is 6-oxocyclohex-1-ene-1-carbonyl-CoA hydrolase from Geobacter metallireducens (strain ATCC 53774 / DSM 7210 / GS-15).